We begin with the raw amino-acid sequence, 1164 residues long: IgA FC receptor (1164 aa).

Positions 1–37 (MFKSNYERKMRYSIRKFSVGVASVAVASLFMGSVAHA) are cleaved as a signal peptide. Disordered stretches follow at residues 54–75 (KPYP…ELET) and 167–220 (HEEV…EDKD). Residues 59–73 (MAQTDQGNNSSSSEL) are compositionally biased toward polar residues. Composition is skewed to basic and acidic residues over residues 167–176 (HEEVEKDKKA) and 183–220 (KQSD…EDKD). IgA-binding stretches follow at residues 199 to 438 (NHQK…KIEL) and 439 to 826 (TVSP…ETNT). The region spanning 434-534 (QKIELTVSPE…VEKTFTITVQ (101 aa)) is the Ig-like domain. The segment covering 536–564 (KEEKQVPKTPEQKDSKTEEKVPQEPKSND) has biased composition (basic and acidic residues). Disordered stretches follow at residues 536–567 (KEEK…DKNQ) and 823–947 (ETNT…PDGL). The segment covering 911 to 920 (PKIPEPPKTP) has biased composition (pro residues). The LPXTG sorting signal signature appears at 1132–1136 (LPYTG). Position 1135 is a pentaglycyl murein peptidoglycan amidated threonine (T1135). The propeptide at 1136–1164 (GVASNLVLEIMGLLGLIGTSFIAMKRRKS) is removed by sortase.

It is found in the secreted. The protein localises to the cell wall. The polypeptide is IgA FC receptor (bag) (Streptococcus agalactiae).